A 146-amino-acid chain; its full sequence is Small ribosomal subunit protein uS9 (146 aa).

A Phosphoserine modification is found at serine 3. Residue lysine 60 is modified to N6-acetyllysine.

It belongs to the universal ribosomal protein uS9 family. Component of the small ribosomal subunit. Part of the small subunit (SSU) processome, composed of more than 70 proteins and the RNA chaperone small nucleolar RNA (snoRNA) U3.

Its subcellular location is the cytoplasm. The protein resides in the nucleus. It is found in the nucleolus. Component of the small ribosomal subunit. The ribosome is a large ribonucleoprotein complex responsible for the synthesis of proteins in the cell. Part of the small subunit (SSU) processome, first precursor of the small eukaryotic ribosomal subunit. During the assembly of the SSU processome in the nucleolus, many ribosome biogenesis factors, an RNA chaperone and ribosomal proteins associate with the nascent pre-rRNA and work in concert to generate RNA folding, modifications, rearrangements and cleavage as well as targeted degradation of pre-ribosomal RNA by the RNA exosome. This Bos taurus (Bovine) protein is Small ribosomal subunit protein uS9 (RPS16).